The sequence spans 479 residues: MANHPIDQELTSPAEEELTPREIVAKLDEHIISQKNAKKAVAIALRNRTRRKKLDPEMREEIYPKNIIMIGPTGVGKTEIARRLSKLCGAPFLKVEATKYTEVGYVGRDVESMIRDLAVISMNLVKQEFRTKVEETAKQKAEEALLDILLPFPGENKHGSGQITGFATSSTLADEEDRKTHFLETREFMRKKLKTGKLDDQEVELDLPNPSVSQVPMLQVFGAGNLDDLDNQLQNVLGDILPKKNKKRKLKIPEALKALEESEAEKLLDPDKVQREALRRVEEMGIIFLDEIDKIAGREGKSGADVSREGVQRDLLPIVEGATVNTKIGPVKTDHILFIAAGAFHMTKPSDLIPELQGRFPIRVELEKLSREDFEKILTAPRSSLTRQYEALLSTDGIQLEFSLDGIQEIARIAYDMNEKHENIGARRLNTILERLLEEVSFEGPDLPESQRKVRIDGKYVTDRLQGVIQNKDLSQYIL.

ATP-binding positions include Ile32, 74–79 (GVGKTE), Asp290, Glu355, and Arg427.

The protein belongs to the ClpX chaperone family. HslU subfamily. As to quaternary structure, a double ring-shaped homohexamer of HslV is capped on each side by a ring-shaped HslU homohexamer. The assembly of the HslU/HslV complex is dependent on binding of ATP.

Its subcellular location is the cytoplasm. ATPase subunit of a proteasome-like degradation complex; this subunit has chaperone activity. The binding of ATP and its subsequent hydrolysis by HslU are essential for unfolding of protein substrates subsequently hydrolyzed by HslV. HslU recognizes the N-terminal part of its protein substrates and unfolds these before they are guided to HslV for hydrolysis. This is ATP-dependent protease ATPase subunit HslU from Leptospira interrogans serogroup Icterohaemorrhagiae serovar copenhageni (strain Fiocruz L1-130).